The chain runs to 372 residues: Protein RecA (372 aa).

Residue 77 to 84 (GPESSGKT) coordinates ATP.

It belongs to the RecA family.

The protein localises to the cytoplasm. Functionally, can catalyze the hydrolysis of ATP in the presence of single-stranded DNA, the ATP-dependent uptake of single-stranded DNA by duplex DNA, and the ATP-dependent hybridization of homologous single-stranded DNAs. It interacts with LexA causing its activation and leading to its autocatalytic cleavage. This Corynebacterium diphtheriae (strain ATCC 700971 / NCTC 13129 / Biotype gravis) protein is Protein RecA.